Reading from the N-terminus, the 108-residue chain is Vitelline membrane protein 15a-1 (108 aa).

The first 18 residues, 1-18, serve as a signal peptide directing secretion; sequence MNKFIILAIFALAVGAMA. The VM domain maps to 52–88; it reads HAPHAKCGANLLVGCAPSVAHVPCVPLPGHAPAHGYG. The segment at 87–108 is disordered; sequence YGHAPAPHYRAPESDSFDQFEE.

This sequence belongs to the vitelline membrane family. Expressed in the middle and posterior regions of the follicle cells.

The protein localises to the secreted. This is Vitelline membrane protein 15a-1 from Aedes aegypti (Yellowfever mosquito).